Here is a 311-residue protein sequence, read N- to C-terminus: Putative S-adenosyl-L-methionine-dependent methyltransferase MRA_0152 (311 aa).

S-adenosyl-L-methionine contacts are provided by residues aspartate 135 and 164–165 (DL).

The protein belongs to the UPF0677 family.

Functionally, exhibits S-adenosyl-L-methionine-dependent methyltransferase activity. The sequence is that of Putative S-adenosyl-L-methionine-dependent methyltransferase MRA_0152 from Mycobacterium tuberculosis (strain ATCC 25177 / H37Ra).